The primary structure comprises 382 residues: D-galactonate dehydratase (382 aa).

Residue D183 participates in Mg(2+) binding. H185 functions as the Proton donor in the catalytic mechanism. Mg(2+)-binding residues include E209 and E235. H285 (proton acceptor) is an active-site residue.

It belongs to the mandelate racemase/muconate lactonizing enzyme family. GalD subfamily. Requires Mg(2+) as cofactor.

It catalyses the reaction D-galactonate = 2-dehydro-3-deoxy-D-galactonate + H2O. It functions in the pathway carbohydrate acid metabolism; D-galactonate degradation; D-glyceraldehyde 3-phosphate and pyruvate from D-galactonate: step 1/3. Catalyzes the dehydration of D-galactonate to 2-keto-3-deoxy-D-galactonate. In Klebsiella pneumoniae subsp. pneumoniae (strain ATCC 700721 / MGH 78578), this protein is D-galactonate dehydratase.